A 414-amino-acid polypeptide reads, in one-letter code: 2,3-diketo-5-methylthiopentyl-1-phosphate enolase (414 aa).

The active-site Proton acceptor is the lysine 99. Substrate is bound by residues lysine 148, 174 to 177 (KDDE), histidine 265, glycine 338, and 360 to 361 (GG). The Mg(2+) site is built by lysine 174, aspartate 176, and glutamate 177. Lysine 174 bears the N6-carboxylysine mark.

It belongs to the RuBisCO large chain family. Type IV subfamily. In terms of assembly, homodimer. Requires Mg(2+) as cofactor.

The enzyme catalyses 5-methylsulfanyl-2,3-dioxopentyl phosphate = 2-hydroxy-5-methylsulfanyl-3-oxopent-1-enyl phosphate. Its pathway is amino-acid biosynthesis; L-methionine biosynthesis via salvage pathway; L-methionine from S-methyl-5-thio-alpha-D-ribose 1-phosphate: step 3/6. Catalyzes the enolization of 2,3-diketo-5-methylthiopentyl-1-phosphate (DK-MTP-1-P) into 2-hydroxy-3-keto-5-methylthiopentenyl-1-phosphate (HK-MTPenyl-1-P). The polypeptide is 2,3-diketo-5-methylthiopentyl-1-phosphate enolase (Bacillus thuringiensis (strain Al Hakam)).